The following is a 224-amino-acid chain: Oxalate oxidase 2 (224 aa).

The N-terminal stretch at 1–23 (MGYSKTLAVSLFAVLLLAPAVLA) is a signal peptide. Cysteines 33 and 49 form a disulfide. The Cupin type-1 domain occupies 63-214 (SKLAKAGNTS…ALRVEAGVVE (152 aa)). N-linked (GlcNAc...) asparagine glycosylation is found at asparagine 70 and asparagine 75. Residues histidine 111, histidine 113, glutamate 118, and histidine 160 each contribute to the Mn(2+) site.

This sequence belongs to the germin family. Oligomer (believed to be a pentamer but probably hexamer). Glycosylated. A form called G contains antennary GlcNAc residues, whereas a form called G' lacks antennary GlcNAc residues in its otherwise identical glycans. As to expression, root.

The protein resides in the secreted. It is found in the extracellular space. It localises to the apoplast. Its subcellular location is the cell wall. The catalysed reaction is oxalate + O2 + 2 H(+) = H2O2 + 2 CO2. Releases hydrogen peroxide in the apoplast. May play an important role in several aspects of plant growth and defense mechanisms. The chain is Oxalate oxidase 2 from Hordeum vulgare (Barley).